The primary structure comprises 209 residues: Ribonuclease HII (209 aa).

The RNase H type-2 domain maps to 5 to 202 (SMTLGIDEAG…KNRILNPKLL (198 aa)). Asp11, Glu12, and Asp108 together coordinate a divalent metal cation.

It belongs to the RNase HII family. The cofactor is Mn(2+). Mg(2+) serves as cofactor.

It localises to the cytoplasm. It carries out the reaction Endonucleolytic cleavage to 5'-phosphomonoester.. Endonuclease that specifically degrades the RNA of RNA-DNA hybrids. The protein is Ribonuclease HII (rnhB) of Helicobacter pylori (strain J99 / ATCC 700824) (Campylobacter pylori J99).